Here is a 159-residue protein sequence, read N- to C-terminus: Transcription elongation factor GreA (159 aa).

Belongs to the GreA/GreB family.

Functionally, necessary for efficient RNA polymerase transcription elongation past template-encoded arresting sites. The arresting sites in DNA have the property of trapping a certain fraction of elongating RNA polymerases that pass through, resulting in locked ternary complexes. Cleavage of the nascent transcript by cleavage factors such as GreA or GreB allows the resumption of elongation from the new 3'terminus. GreA releases sequences of 2 to 3 nucleotides. This is Transcription elongation factor GreA from Orientia tsutsugamushi (strain Boryong) (Rickettsia tsutsugamushi).